Consider the following 431-residue polypeptide: STE20-related kinase adapter protein alpha (431 aa).

Residues S2 and S46 each carry the phosphoserine modification. Residues 69–379 enclose the Protein kinase domain; it reads YELLTVIGKG…ASTLLNHSFF (311 aa). A disordered region spans residues 310-347; that stretch reads LTMSPSRSVANSGLSDSLTTSTPRPSNGDSPSHPYHRT. The segment covering 312–339 has biased composition (polar residues); that stretch reads MSPSRSVANSGLSDSLTTSTPRPSNGDS. Phosphothreonine; by LKB1 occurs at positions 329 and 419.

It belongs to the protein kinase superfamily. STE Ser/Thr protein kinase family. STE20 subfamily. Component of a trimeric complex composed of STK11/LKB1, STRAD (STRADA or STRADB) and CAB39/MO25 (CAB39/MO25alpha or CAB39L/MO25beta): the complex tethers STK11/LKB1 in the cytoplasm and stimulates its catalytic activity.

It localises to the nucleus. The protein resides in the cytoplasm. Functionally, pseudokinase which, in complex with CAB39/MO25 (CAB39/MO25alpha or CAB39L/MO25beta), binds to and activates STK11/LKB1. Adopts a closed conformation typical of active protein kinases and binds STK11/LKB1 as a pseudosubstrate, promoting conformational change of STK11/LKB1 in an active conformation. This Homo sapiens (Human) protein is STE20-related kinase adapter protein alpha (STRADA).